A 511-amino-acid polypeptide reads, in one-letter code: 60 kDa neurofilament protein (511 aa).

Positions 1-32 (MSVTQKKTEISTTTTYEGESRPSSGMSGFSYS) are disordered. Residues 1–99 (MSVTQKKTEI…KANREREKQD (99 aa)) are head. The span at 21-30 (RPSSGMSGFS) shows a compositional bias: polar residues. Positions 96–449 (EKQDMRDLNE…KLLEGEESRV (354 aa)) constitute an IF rod domain. The tract at residues 100 to 135 (MRDLNERFANYIEKVRFLEAQNKKLAGELEELKSKW) is coil 1A. The interval 136–145 (GKETSAIKEM) is linker 1. The segment at 146–284 (YETELEEARK…VHAQELKELA (139 aa)) is coil 1B. Positions 285–303 (ALAYRDTTAENREFWRNEL) are linker 12. A coil 2 region spans residues 304–449 (AQAIRDIQQE…KLLEGEESRV (146 aa)). A tail region spans residues 450–511 (GMKQIVEQVV…EEKKSMGSSD (62 aa)). The tract at residues 479–511 (GYEATGGITTTTTTSSQERRSMSEEKKSMGSSD) is disordered. Low complexity predominate over residues 483–492 (TGGITTTTTT). Residues 495-511 (QERRSMSEEKKSMGSSD) show a composition bias toward basic and acidic residues.

Belongs to the intermediate filament family.

Major squid neurofilament protein. In Doryteuthis pealeii (Longfin inshore squid), this protein is 60 kDa neurofilament protein.